A 407-amino-acid polypeptide reads, in one-letter code: 41 kDa spicule matrix protein (407 aa).

Positions 1 to 17 (MKGVLFIVASLVAFATG) are cleaved as a signal peptide. Residues 29–160 (SGQSCYRYFN…PGRAPVMKRQ (132 aa)) form the C-type lectin domain. Disordered stretches follow at residues 143–176 (PQNPMSGPPGRAPVMKRQNPPVRPGQGGRQIPQG) and 204–407 (IGQQ…DALA). Positions 223-369 (NQPGMGGRQP…MGGRQPGMGG (147 aa)) are enriched in gly residues. Positions 370 to 398 (QQPNNPNNPNNPNNPNNPNNPNPRFNRPR) are enriched in low complexity.

The protein belongs to the SM50 family. In terms of tissue distribution, expressed specifically in the micromere/primary mesenchyme cells (PMC) lineage.

The protein resides in the secreted. In terms of biological role, major matrix protein of the sea urchin embryo spicule which directs crystal growth in certain orientations and inhibit growth in others. The chain is 41 kDa spicule matrix protein from Hemicentrotus pulcherrimus (Sea urchin).